A 338-amino-acid polypeptide reads, in one-letter code: LIX1-like protein (338 aa).

Positions 1-65 (METMRAQRLQ…LLLAGAPGLP (65 aa)) are disordered. Residues 29-38 (TGAPTSAATP) are compositionally biased toward low complexity. A compositionally biased stretch (pro residues) spans 39-56 (PAGPPPAPPPPAPPPPPL).

The protein belongs to the LIX1 family.

This is LIX1-like protein (Lix1l) from Rattus norvegicus (Rat).